Consider the following 447-residue polypeptide: M-phase inducer phosphatase 3 (447 aa).

Position 2 is an N-acetylserine (S2). A phosphoserine mark is found at S20, S38, S56, S60, and S63. T66 carries the post-translational modification Phosphothreonine; by CDK1. Polar residues predominate over residues 81–90 (MSASPLTTSA). The disordered stretch occupies residues 81 to 109 (MSASPLTTSADLEDNGSLDSSGPLDRQLT). Residue S128 is modified to Phosphoserine. At T129 the chain carries Phosphothreonine. Position 192 is a phosphoserine; by CDK1 (S192). Residues S213 and S220 each carry the phosphoserine; by PLK3 modification. The Rhodanese domain maps to 294-401 (VIERFYIIDC…FFPEYMELCD (108 aa)). The active site involves C350. S445 is modified (phosphoserine).

It belongs to the MPI phosphatase family. Interacts with MAPK14 and 14-3-3 proteins. When phosphorylated on Ser-128 and/or Thr-129, interacts with PLK1. Interacts with MARK3/C-TAK1. Post-translationally, phosphorylated by PLK4. Phosphorylated by PLK1, leading to activate the phosphatase activity. Phosphorylated by CHEK1 and MAPKAPK2. This phosphorylation creates a binding site for 14-3-3 protein and inhibits the phosphatase activity. Phosphorylation by PLK3 at Ser-213 promotes nuclear translocation. Ser-220 is a minor phosphorylation site. Phosphorylation by CDK1 occurs at G2 and G2-M transition and leads to increased activity. In terms of tissue distribution, spleen and thymus.

It localises to the nucleus. The catalysed reaction is O-phospho-L-tyrosyl-[protein] + H2O = L-tyrosyl-[protein] + phosphate. Functionally, functions as a dosage-dependent inducer in mitotic control. Tyrosine protein phosphatase required for progression of the cell cycle. When phosphorylated, highly effective in activating G2 cells into prophase. Directly dephosphorylates CDK1 and activates its kinase activity. This chain is M-phase inducer phosphatase 3 (Cdc25c), found in Mus musculus (Mouse).